A 453-amino-acid chain; its full sequence is T-box transcription factor T homolog (453 aa).

A DNA-binding region (T-box) is located at residues 47-217; that stretch reads LWRRFSKLTN…YNPFAKAFLD (171 aa). Residues 283 to 304 are disordered; the sequence is RSHRSTPYPPPPYEQKYSPTSA.

It is found in the nucleus. In terms of biological role, may be involved in the transcriptional regulation of genes required for gastrulation. This Patiria pectinifera (Starfish) protein is T-box transcription factor T homolog.